Here is a 479-residue protein sequence, read N- to C-terminus: Aldehyde dehydrogenase family 3 member B3 (479 aa).

Active-site residues include glutamate 223 and cysteine 257. Cysteine 476 carries the S-geranylgeranyl cysteine lipid modification. Positions 477–479 are cleaved as a propeptide — removed in mature form; it reads TLL.

This sequence belongs to the aldehyde dehydrogenase family. Geranylgeranylation is important for membrane localization and enzyme activity. As to expression, expressed in testis, kidney, small intestine, spleen, white adipose tissue, liver and lung.

It localises to the cell membrane. The enzyme catalyses an aldehyde + NAD(+) + H2O = a carboxylate + NADH + 2 H(+). The catalysed reaction is hexadecanoate + NADH + 2 H(+) = hexadecanal + NAD(+) + H2O. It catalyses the reaction octanal + NAD(+) + H2O = octanoate + NADH + 2 H(+). In terms of biological role, oxidizes medium and long chain aldehydes into non-toxic fatty acids. The protein is Aldehyde dehydrogenase family 3 member B3 of Mus musculus (Mouse).